The following is a 152-amino-acid chain: Ubiquitin-conjugating enzyme E2 1 (152 aa).

In terms of domain architecture, UBC core spans Pro-4–Thr-150. Cys-88 acts as the Glycyl thioester intermediate in catalysis. Residues Asn-119–Asp-152 are disordered. Over residues Ser-131–Val-145 the composition is skewed to basic and acidic residues.

This sequence belongs to the ubiquitin-conjugating enzyme family. In terms of tissue distribution, ubiquitously expressed.

It catalyses the reaction S-ubiquitinyl-[E1 ubiquitin-activating enzyme]-L-cysteine + [E2 ubiquitin-conjugating enzyme]-L-cysteine = [E1 ubiquitin-activating enzyme]-L-cysteine + S-ubiquitinyl-[E2 ubiquitin-conjugating enzyme]-L-cysteine.. The protein operates within protein modification; protein ubiquitination. Accepts the ubiquitin from the E1 complex and catalyzes its covalent attachment to other proteins. This chain is Ubiquitin-conjugating enzyme E2 1 (UBC1), found in Arabidopsis thaliana (Mouse-ear cress).